A 206-amino-acid polypeptide reads, in one-letter code: Dephospho-CoA kinase (206 aa).

Positions 4 to 204 (VIGLTGGIAS…EGYIESHSED (201 aa)) constitute a DPCK domain. Residue 12 to 17 (ASGKST) participates in ATP binding.

This sequence belongs to the CoaE family.

It localises to the cytoplasm. It carries out the reaction 3'-dephospho-CoA + ATP = ADP + CoA + H(+). Its pathway is cofactor biosynthesis; coenzyme A biosynthesis; CoA from (R)-pantothenate: step 5/5. In terms of biological role, catalyzes the phosphorylation of the 3'-hydroxyl group of dephosphocoenzyme A to form coenzyme A. The polypeptide is Dephospho-CoA kinase (Staphylococcus saprophyticus subsp. saprophyticus (strain ATCC 15305 / DSM 20229 / NCIMB 8711 / NCTC 7292 / S-41)).